The primary structure comprises 498 residues: N-succinylglutamate 5-semialdehyde dehydrogenase 1 (498 aa).

231–236 (GSSNTG) contributes to the NAD(+) binding site. Active-site residues include E254 and C288.

This sequence belongs to the aldehyde dehydrogenase family. AstD subfamily.

It carries out the reaction N-succinyl-L-glutamate 5-semialdehyde + NAD(+) + H2O = N-succinyl-L-glutamate + NADH + 2 H(+). Its pathway is amino-acid degradation; L-arginine degradation via AST pathway; L-glutamate and succinate from L-arginine: step 4/5. Its function is as follows. Catalyzes the NAD-dependent reduction of succinylglutamate semialdehyde into succinylglutamate. The protein is N-succinylglutamate 5-semialdehyde dehydrogenase 1 of Shewanella denitrificans (strain OS217 / ATCC BAA-1090 / DSM 15013).